The sequence spans 334 residues: Nucleoid-associated protein YPTS_1390 (334 aa).

It belongs to the YejK family.

Its subcellular location is the cytoplasm. The protein resides in the nucleoid. The protein is Nucleoid-associated protein YPTS_1390 of Yersinia pseudotuberculosis serotype IB (strain PB1/+).